Here is a 108-residue protein sequence, read N- to C-terminus: Nucleoid-associated protein CHAB381_0200 (108 aa).

This sequence belongs to the YbaB/EbfC family. In terms of assembly, homodimer.

It localises to the cytoplasm. The protein localises to the nucleoid. Functionally, binds to DNA and alters its conformation. May be involved in regulation of gene expression, nucleoid organization and DNA protection. This chain is Nucleoid-associated protein CHAB381_0200, found in Campylobacter hominis (strain ATCC BAA-381 / DSM 21671 / CCUG 45161 / LMG 19568 / NCTC 13146 / CH001A).